Consider the following 82-residue polypeptide: Small ribosomal subunit protein uS17 (82 aa).

This sequence belongs to the universal ribosomal protein uS17 family. In terms of assembly, part of the 30S ribosomal subunit.

In terms of biological role, one of the primary rRNA binding proteins, it binds specifically to the 5'-end of 16S ribosomal RNA. This is Small ribosomal subunit protein uS17 from Phenylobacterium zucineum (strain HLK1).